Here is a 344-residue protein sequence, read N- to C-terminus: tRNA N6-adenosine threonylcarbamoyltransferase (344 aa).

Residues His-113 and His-117 each contribute to the Fe cation site. Substrate-binding positions include 135–139 (LVSGG), Asp-169, Gly-182, Asp-186, and Asn-278. Asp-306 serves as a coordination point for Fe cation. The segment at 325–344 (ESPISVGTDPSLSVETPQVF) is disordered. Residues 326–344 (SPISVGTDPSLSVETPQVF) show a composition bias toward polar residues.

It belongs to the KAE1 / TsaD family. It depends on Fe(2+) as a cofactor.

It localises to the cytoplasm. The enzyme catalyses L-threonylcarbamoyladenylate + adenosine(37) in tRNA = N(6)-L-threonylcarbamoyladenosine(37) in tRNA + AMP + H(+). Its function is as follows. Required for the formation of a threonylcarbamoyl group on adenosine at position 37 (t(6)A37) in tRNAs that read codons beginning with adenine. Is involved in the transfer of the threonylcarbamoyl moiety of threonylcarbamoyl-AMP (TC-AMP) to the N6 group of A37, together with TsaE and TsaB. TsaD likely plays a direct catalytic role in this reaction. This Corynebacterium glutamicum (strain ATCC 13032 / DSM 20300 / JCM 1318 / BCRC 11384 / CCUG 27702 / LMG 3730 / NBRC 12168 / NCIMB 10025 / NRRL B-2784 / 534) protein is tRNA N6-adenosine threonylcarbamoyltransferase.